A 371-amino-acid chain; its full sequence is UDP-N-acetylglucosamine--N-acetylmuramyl-(pentapeptide) pyrophosphoryl-undecaprenol N-acetylglucosamine transferase (371 aa).

Residues 10–12, Asn124, Arg166, Ser196, and Gln301 contribute to the UDP-N-acetyl-alpha-D-glucosamine site; that span reads TGG.

This sequence belongs to the glycosyltransferase 28 family. MurG subfamily.

The protein localises to the cell membrane. The catalysed reaction is di-trans,octa-cis-undecaprenyl diphospho-N-acetyl-alpha-D-muramoyl-L-alanyl-D-glutamyl-meso-2,6-diaminopimeloyl-D-alanyl-D-alanine + UDP-N-acetyl-alpha-D-glucosamine = di-trans,octa-cis-undecaprenyl diphospho-[N-acetyl-alpha-D-glucosaminyl-(1-&gt;4)]-N-acetyl-alpha-D-muramoyl-L-alanyl-D-glutamyl-meso-2,6-diaminopimeloyl-D-alanyl-D-alanine + UDP + H(+). It participates in cell wall biogenesis; peptidoglycan biosynthesis. Functionally, cell wall formation. Catalyzes the transfer of a GlcNAc subunit on undecaprenyl-pyrophosphoryl-MurNAc-pentapeptide (lipid intermediate I) to form undecaprenyl-pyrophosphoryl-MurNAc-(pentapeptide)GlcNAc (lipid intermediate II). The polypeptide is UDP-N-acetylglucosamine--N-acetylmuramyl-(pentapeptide) pyrophosphoryl-undecaprenol N-acetylglucosamine transferase (Moorella thermoacetica (strain ATCC 39073 / JCM 9320)).